Reading from the N-terminus, the 151-residue chain is Large ribosomal subunit protein bL9 (151 aa).

This sequence belongs to the bacterial ribosomal protein bL9 family.

Functionally, binds to the 23S rRNA. This is Large ribosomal subunit protein bL9 from Desulfosudis oleivorans (strain DSM 6200 / JCM 39069 / Hxd3) (Desulfococcus oleovorans).